Consider the following 387-residue polypeptide: Cystathionine gamma-lyase (387 aa).

Positions 53, 105, and 110 each coordinate substrate. Residue K202 is modified to N6-(pyridoxal phosphate)lysine. E329 is a substrate binding site.

It belongs to the trans-sulfuration enzymes family. Homotetramer. Interacts with CALM in a calcium-dependent manner. The cofactor is pyridoxal 5'-phosphate.

It localises to the cytoplasm. The catalysed reaction is L,L-cystathionine + H2O = 2-oxobutanoate + L-cysteine + NH4(+). The enzyme catalyses L-cysteine + H2O = hydrogen sulfide + pyruvate + NH4(+) + H(+). It carries out the reaction L-homocysteine + H2O = 2-oxobutanoate + hydrogen sulfide + NH4(+) + H(+). It catalyses the reaction L-homoserine = 2-oxobutanoate + NH4(+). It participates in amino-acid biosynthesis; L-cysteine biosynthesis; L-cysteine from L-homocysteine and L-serine: step 2/2. Catalyzes the last step in the trans-sulfuration pathway from L-methionine to L-cysteine in a pyridoxal-5'-phosphate (PLP)-dependent manner, which consists on cleaving the L,L-cystathionine molecule into L-cysteine, ammonia and 2-oxobutanoate. Part of the L-cysteine derived from the trans-sulfuration pathway is utilized for biosynthesis of the ubiquitous antioxidant glutathione. Besides its role in the conversion of L-cystathionine into L-cysteine, it utilizes L-cysteine and L-homocysteine as substrates (at much lower rates than L,L-cystathionine) to produce the endogenous gaseous signaling molecule hydrogen sulfide (H2S). This is Cystathionine gamma-lyase (cysA) from Dictyostelium discoideum (Social amoeba).